The following is a 97-amino-acid chain: RNA-binding protein Hfq (97 aa).

In terms of domain architecture, Sm spans 10–70; that stretch reads DPFLNALRKE…ISTIVPARSV (61 aa).

The protein belongs to the Hfq family. In terms of assembly, homohexamer.

In terms of biological role, RNA chaperone that binds small regulatory RNA (sRNAs) and mRNAs to facilitate mRNA translational regulation in response to envelope stress, environmental stress and changes in metabolite concentrations. Also binds with high specificity to tRNAs. The chain is RNA-binding protein Hfq from Neisseria gonorrhoeae (strain ATCC 700825 / FA 1090).